The sequence spans 88 residues: Cell division topological specificity factor (88 aa).

It belongs to the MinE family.

Functionally, prevents the cell division inhibition by proteins MinC and MinD at internal division sites while permitting inhibition at polar sites. This ensures cell division at the proper site by restricting the formation of a division septum at the midpoint of the long axis of the cell. The protein is Cell division topological specificity factor of Aeromonas salmonicida (strain A449).